A 165-amino-acid polypeptide reads, in one-letter code: LOB domain-containing protein 21 (165 aa).

Positions 10 to 111 constitute an LOB domain; it reads SSCAACKLLK…HDLAVARTRL (102 aa).

This sequence belongs to the LOB domain-containing protein family.

The protein is LOB domain-containing protein 21 (LBD21) of Arabidopsis thaliana (Mouse-ear cress).